The sequence spans 339 residues: MSTVNASMTVIGAGSYGTALAITLARNGHEVVLWGHDPKHIATLQHDRCNVAFLPDVPFPDSLHLESDLATALAASRNILVVVPSHVFGQVLHQIKPLMRADARIVWATKGLEAETGRLLQDVAREVLGDDIPLAVISGPTFAKELAAGLPTAISLASTDQTFSDDLQHLLHCGKSFRVYSNPDFIGVQLGGAVKNVIAIGAGMSDGIGFGANARTALITRGLTEMSRLGEALGADPATFMGMAGLGDLVLTCTDNQSRNRRFGMMLGQGMDVMGAQEKIGQVVEGYRNTKEVRELAHRFGVEMPITEEIYQVLYCGKNAREAALTLLGRSRKEERSSS.

S15, Y16, H36, and K110 together coordinate NADPH. Residues K110, G139, and T141 each coordinate sn-glycerol 3-phosphate. Position 143 (A143) interacts with NADPH. Positions 195, 248, 258, 259, and 260 each coordinate sn-glycerol 3-phosphate. Catalysis depends on K195, which acts as the Proton acceptor. R259 contributes to the NADPH binding site. Residues V283 and E285 each coordinate NADPH.

Belongs to the NAD-dependent glycerol-3-phosphate dehydrogenase family.

Its subcellular location is the cytoplasm. It carries out the reaction sn-glycerol 3-phosphate + NAD(+) = dihydroxyacetone phosphate + NADH + H(+). It catalyses the reaction sn-glycerol 3-phosphate + NADP(+) = dihydroxyacetone phosphate + NADPH + H(+). Its pathway is membrane lipid metabolism; glycerophospholipid metabolism. Its function is as follows. Catalyzes the reduction of the glycolytic intermediate dihydroxyacetone phosphate (DHAP) to sn-glycerol 3-phosphate (G3P), the key precursor for phospholipid synthesis. The chain is Glycerol-3-phosphate dehydrogenase [NAD(P)+] from Enterobacter sp. (strain 638).